The primary structure comprises 124 residues: Large ribosomal subunit protein bL12 (124 aa).

The protein belongs to the bacterial ribosomal protein bL12 family. As to quaternary structure, homodimer. Part of the ribosomal stalk of the 50S ribosomal subunit. Forms a multimeric L10(L12)X complex, where L10 forms an elongated spine to which 2 to 4 L12 dimers bind in a sequential fashion. Binds GTP-bound translation factors.

In terms of biological role, forms part of the ribosomal stalk which helps the ribosome interact with GTP-bound translation factors. Is thus essential for accurate translation. The chain is Large ribosomal subunit protein bL12 from Dehalococcoides mccartyi (strain ATCC BAA-2266 / KCTC 15142 / 195) (Dehalococcoides ethenogenes (strain 195)).